We begin with the raw amino-acid sequence, 93 residues long: Probable Fe(2+)-trafficking protein (93 aa).

This sequence belongs to the Fe(2+)-trafficking protein family.

Could be a mediator in iron transactions between iron acquisition and iron-requiring processes, such as synthesis and/or repair of Fe-S clusters in biosynthetic enzymes. This chain is Probable Fe(2+)-trafficking protein, found in Acidithiobacillus ferrooxidans (strain ATCC 23270 / DSM 14882 / CIP 104768 / NCIMB 8455) (Ferrobacillus ferrooxidans (strain ATCC 23270)).